Reading from the N-terminus, the 127-residue chain is Ribosome-binding factor A (127 aa).

This sequence belongs to the RbfA family. As to quaternary structure, monomer. Binds 30S ribosomal subunits, but not 50S ribosomal subunits or 70S ribosomes.

It is found in the cytoplasm. Its function is as follows. One of several proteins that assist in the late maturation steps of the functional core of the 30S ribosomal subunit. Associates with free 30S ribosomal subunits (but not with 30S subunits that are part of 70S ribosomes or polysomes). Required for efficient processing of 16S rRNA. May interact with the 5'-terminal helix region of 16S rRNA. The protein is Ribosome-binding factor A of Chloroflexus aurantiacus (strain ATCC 29366 / DSM 635 / J-10-fl).